The primary structure comprises 401 residues: Probable sodium/metabolite cotransporter BASS5, chloroplastic (401 aa).

A chloroplast-targeting transit peptide spans 1 to 46 (MAPNAAVLVRPHIAGVHHLPTGRRLPRLAPPQAVSPPFSRQKGSVV). Transmembrane regions (helical) follow at residues 93 to 113 (TIIPHVVLGSTILALVYPPSF), 122 to 142 (APALGFLMFAVGVNSSVKDFI), 159 to 179 (FIIKPFLGFLFGTLAVTIFNL), 185 to 205 (AGIMLVSCVSGAQLSNYATFL), 215 to 235 (IVMTSLSTATAVFVTPTLSYF), 247 to 267 (GMMSSIVQIVVAPIAAGLLLN), 273 to 293 (LCSAIQPFLPPLSVFVTALCV), 299 to 319 (INIKAVLSPFGLATVLLLFAF), and 372 to 392 (LVGVPPAISVVLMSLMGFALV).

Belongs to the bile acid:sodium symporter (BASS) (TC 2.A.28) family.

The protein resides in the membrane. The protein localises to the plastid. Its subcellular location is the chloroplast envelope. Functionally, may function as sodium-coupled metabolite transporter across the chloroplast envelope. The polypeptide is Probable sodium/metabolite cotransporter BASS5, chloroplastic (BASS5) (Oryza sativa subsp. indica (Rice)).